Consider the following 275-residue polypeptide: Large ribosomal subunit protein uL2 (275 aa).

The tract at residues 222–275 is disordered; it reads GVAMNPVDHPMGGGEGRSSGGRHPCSPWGMPTKGYKTRKNKTTDKFIVRKRNKR.

It belongs to the universal ribosomal protein uL2 family. In terms of assembly, part of the 50S ribosomal subunit. Forms a bridge to the 30S subunit in the 70S ribosome.

One of the primary rRNA binding proteins. Required for association of the 30S and 50S subunits to form the 70S ribosome, for tRNA binding and peptide bond formation. It has been suggested to have peptidyltransferase activity; this is somewhat controversial. Makes several contacts with the 16S rRNA in the 70S ribosome. The sequence is that of Large ribosomal subunit protein uL2 from Desulfatibacillum aliphaticivorans.